Here is a 532-residue protein sequence, read N- to C-terminus: L-proline--[L-prolyl-carrier protein] ligase (532 aa).

The tract at residues Lys510–Arg532 is disordered.

The protein belongs to the ATP-dependent AMP-binding enzyme family.

The catalysed reaction is holo-[peptidyl-carrier protein] + L-proline + ATP = L-prolyl-[peptidyl-carrier protein] + AMP + diphosphate. In terms of biological role, involved in the biosynthesis of undecylprodigiosin. Catalyzes the conversion of L-proline to L-prolyl-AMP and the transfer of the L-prolyl group to acyl carrier protein RedO. The chain is L-proline--[L-prolyl-carrier protein] ligase from Streptomyces coelicolor (strain ATCC BAA-471 / A3(2) / M145).